Consider the following 244-residue polypeptide: Putative outer membrane protein RC0105 (244 aa).

An N-terminal signal peptide occupies residues 1–23 (MLRIVKKLGIILFVSTISINSFA).

This sequence belongs to the OmpW/AlkL family.

The protein localises to the cell outer membrane. This chain is Putative outer membrane protein RC0105, found in Rickettsia conorii (strain ATCC VR-613 / Malish 7).